The primary structure comprises 701 residues: Polyribonucleotide nucleotidyltransferase (701 aa).

Residues D487 and D493 each contribute to the Mg(2+) site. The KH domain occupies 554-613; that stretch reads PTMIAMKIDTDKIRDVIGKGGATIRAICEETKASIDIEDDGSIKIFGESKEAAEAARQRV. An S1 motif domain is found at 623 to 691; sequence GKIYLGKVER…NRGRIKLSIK (69 aa).

It belongs to the polyribonucleotide nucleotidyltransferase family. Component of the RNA degradosome, which is a multiprotein complex involved in RNA processing and mRNA degradation. Mg(2+) is required as a cofactor.

It is found in the cytoplasm. It carries out the reaction RNA(n+1) + phosphate = RNA(n) + a ribonucleoside 5'-diphosphate. Its function is as follows. Involved in mRNA degradation. Catalyzes the phosphorolysis of single-stranded polyribonucleotides processively in the 3'- to 5'-direction. The polypeptide is Polyribonucleotide nucleotidyltransferase (Pseudomonas syringae pv. tomato (strain ATCC BAA-871 / DC3000)).